Reading from the N-terminus, the 429-residue chain is Glucose-6-phosphate isomerase (429 aa).

Glu282 (proton donor) is an active-site residue. Residues His303 and Lys418 contribute to the active site.

Belongs to the GPI family.

The protein resides in the cytoplasm. It catalyses the reaction alpha-D-glucose 6-phosphate = beta-D-fructose 6-phosphate. It participates in carbohydrate biosynthesis; gluconeogenesis. The protein operates within carbohydrate degradation; glycolysis; D-glyceraldehyde 3-phosphate and glycerone phosphate from D-glucose: step 2/4. Its function is as follows. Catalyzes the reversible isomerization of glucose-6-phosphate to fructose-6-phosphate. The protein is Glucose-6-phosphate isomerase of Mesomycoplasma hyopneumoniae (strain 7448) (Mycoplasma hyopneumoniae).